The sequence spans 347 residues: Syntaxin-32 (347 aa).

Topologically, residues methionine 1–arginine 325 are cytoplasmic. Disordered regions lie at residues histidine 172 to phenylalanine 191 and proline 208 to valine 251. 2 stretches are compositionally biased toward polar residues: residues glutamine 177 to phenylalanine 191 and asparagine 213 to leucine 222. The span at glutamine 237–glutamine 249 shows a compositional bias: low complexity. The 63-residue stretch at aspartate 255–tyrosine 317 folds into the t-SNARE coiled-coil homology domain. Residues tryptophan 326 to valine 346 traverse the membrane as a helical; Anchor for type IV membrane protein segment. Residue alanine 347 is a topological domain, vesicular.

Belongs to the syntaxin family. As to quaternary structure, part of the t-SNARE complex.

The protein resides in the golgi apparatus. It is found in the cis-Golgi network membrane. In terms of biological role, vesicle trafficking protein that functions in the secretory pathway. This Arabidopsis thaliana (Mouse-ear cress) protein is Syntaxin-32 (SYP32).